Consider the following 234-residue polypeptide: Flagellar L-ring protein (234 aa).

A signal peptide spans 1–15; the sequence is MRYAVICMLLLAASG. C16 is lipidated: N-palmitoyl cysteine. C16 is lipidated: S-diacylglycerol cysteine.

It belongs to the FlgH family. In terms of assembly, the basal body constitutes a major portion of the flagellar organelle and consists of four rings (L,P,S, and M) mounted on a central rod.

The protein localises to the cell outer membrane. It localises to the bacterial flagellum basal body. Assembles around the rod to form the L-ring and probably protects the motor/basal body from shearing forces during rotation. This chain is Flagellar L-ring protein, found in Oleidesulfovibrio alaskensis (strain ATCC BAA-1058 / DSM 17464 / G20) (Desulfovibrio alaskensis).